Consider the following 350-residue polypeptide: MSHQTGIQASEDVKEIFARARNGKYRLLKISIENEQLVVGSCSPPSDSWEQDYDSFVLPLLEDKQPCYVLFRLDSQNAQGYEWIFIAWSPDHSHVRQKMLYAATRATLKKEFGGGHIKDEVFGTVKEDVSLHGYKKYLLSQSSPAPLTAAEEELRQIKINEVQTDVSVDTKHQTLQGVAFPISRDAFQALEKLSKKQLNYVQLEIDIKNETIILANTENTELRDLPKRIPKDSARYHFFLYKHSHEGDYLESVVFIYSMPGYTCSIRERMLYSSCKSPLLEIVERQLQMDVIRKIEIDNGDELTADFLYDEVHPKQHAHKQSFAKPKGPAGKRGIRRLIRGPAEAEATTD.

Ser2 bears the N-acetylserine mark. Residues 2-139 (SHQTGIQASE…SLHGYKKYLL (138 aa)) form the ADF-H 1 domain. Phosphoserine occurs at positions 143 and 277. The region spanning 175 to 313 (LQGVAFPISR…TADFLYDEVH (139 aa)) is the ADF-H 2 domain. Tyr309 bears the Phosphotyrosine mark. The interval 317–350 (HAHKQSFAKPKGPAGKRGIRRLIRGPAEAEATTD) is disordered. Thr349 bears the Phosphothreonine mark.

It belongs to the actin-binding proteins ADF family. Twinfilin subfamily. Interacts with G-actin; ADP-actin form and capping protein (CP). May also be able to interact with TWF2 and phosphoinositides, PI(4,5)P2. When bound to PI(4,5)P2, it is down-regulated. Interacts with ACTG1. Post-translationally, phosphorylated on serine and threonine residues. Widely expressed with highest levels in brain, liver and kidney. Also expressed in heart, lung and testis. Not detected in spleen or skeletal muscle.

It is found in the cytoplasm. It localises to the cytoskeleton. Actin-binding protein involved in motile and morphological processes. Inhibits actin polymerization, likely by sequestering G-actin. By capping the barbed ends of filaments, it also regulates motility. Seems to play an important role in clathrin-mediated endocytosis and distribution of endocytic organelles. The chain is Twinfilin-1 (Twf1) from Mus musculus (Mouse).